The primary structure comprises 428 residues: CinA-like protein (428 aa).

Belongs to the CinA family.

The chain is CinA-like protein from Endomicrobium trichonymphae.